A 206-amino-acid chain; its full sequence is Ribosomal RNA large subunit methyltransferase E (206 aa).

S-adenosyl-L-methionine is bound by residues Gly-60, Trp-62, Asp-80, Asp-96, and Asp-121. The Proton acceptor role is filled by Lys-161.

The protein belongs to the class I-like SAM-binding methyltransferase superfamily. RNA methyltransferase RlmE family.

It is found in the cytoplasm. It carries out the reaction uridine(2552) in 23S rRNA + S-adenosyl-L-methionine = 2'-O-methyluridine(2552) in 23S rRNA + S-adenosyl-L-homocysteine + H(+). Specifically methylates the uridine in position 2552 of 23S rRNA at the 2'-O position of the ribose in the fully assembled 50S ribosomal subunit. The chain is Ribosomal RNA large subunit methyltransferase E from Francisella tularensis subsp. tularensis (strain FSC 198).